Reading from the N-terminus, the 321-residue chain is Thioredoxin reductase tcpT (321 aa).

Residues 14–17 (GGPA), 36–41 (DSGRYR), histidine 49, and alanine 114 each bind FAD. An intrachain disulfide couples cysteine 138 to cysteine 141. Residues aspartate 282 and 289–290 (NV) contribute to the FAD site.

The protein belongs to the class-II pyridine nucleotide-disulfide oxidoreductase family. In terms of assembly, homodimer. FAD is required as a cofactor.

Its pathway is secondary metabolite biosynthesis. In terms of biological role, thioredoxin reductase; part of the gene cluster that mediates the biosynthesis of an unusual class of epipolythiodioxopiperazines (ETPs) lacking the reactive thiol group important for toxicity. Firstly, L-tyrosine is prenylated by tcpD, before undergoing condensation with L-glycine in a reaction catalyzed by the NRPS tcpP leading to the diketopiperazine (DKP) backbone. Afterwards the alpha-carbon of tyrosine is oxidized by the cytochrome P450 tcpC to form a hydroxyl group. However, in contrast other ETP biosynthesis pathways studied so far, tcpC is not able to bishydroxylate the DKP at both alpha-carbon positions, but hydroxylates the alpha-carbon of the tyrosine part and the nitrogen of the glycine part. The next steps involve an alpha,beta-elimination reaction catalyzed by tcpI, a methylation by the methyltransferase tcpN the action of the four enzyme cascade tcpG/K/J/I. Due to a dysfunctional cytochrome P450 monooxygenase tcpC, the pathway leads to the biosynthesis of probable non-toxic metabolites lacking the reactive thiol group. This is Thioredoxin reductase tcpT from Claviceps purpurea (strain 20.1) (Ergot fungus).